A 1102-amino-acid polypeptide reads, in one-letter code: DNA-directed RNA polymerase subunit beta (1102 aa).

Positions 1076–1102 (IDSQRRAPNRPTYESLHTEEDLEEEEV) are disordered.

This sequence belongs to the RNA polymerase beta chain family. In cyanobacteria the RNAP catalytic core is composed of 2 alpha, 1 beta, 1 beta', 1 gamma and 1 omega subunit. When a sigma factor is associated with the core the holoenzyme is formed, which can initiate transcription.

The enzyme catalyses RNA(n) + a ribonucleoside 5'-triphosphate = RNA(n+1) + diphosphate. Functionally, DNA-dependent RNA polymerase catalyzes the transcription of DNA into RNA using the four ribonucleoside triphosphates as substrates. This is DNA-directed RNA polymerase subunit beta from Synechocystis sp. (strain ATCC 27184 / PCC 6803 / Kazusa).